The following is a 359-amino-acid chain: 4-galactosyl-N-acetylglucosaminide 3-alpha-L-fucosyltransferase 9 (359 aa).

At 1–11 (MTSASKGILRP) the chain is on the cytoplasmic side. Residues 12–32 (FLIVCIILACSMVCLFIYIKP) traverse the membrane as a helical; Signal-anchor for type II membrane protein segment. Residues 33-359 (TNSWIFSPME…VGNLEKWFWN (327 aa)) are Lumenal-facing. N-linked (GlcNAc...) asparagine glycosylation occurs at asparagine 62. Residues 63-168 (ETTILIWVWP…RRDSDIQVPY (106 aa)) are acceptor-binding. Position 75 (glutamine 75) interacts with a beta-D-galactosyl-(1-&gt;4)-N-acetyl-beta-D-glucosaminyl derivative. 3 disulfides stabilise this stretch: cysteine 82/cysteine 335, cysteine 91/cysteine 338, and cysteine 190/cysteine 238. The N-linked (GlcNAc...) asparagine glycan is linked to asparagine 101. An a beta-D-galactosyl-(1-&gt;4)-N-acetyl-beta-D-glucosaminyl derivative-binding site is contributed by glutamate 137. Glutamate 137 serves as the catalytic Nucleophile. Residue glutamate 137 coordinates GDP-beta-L-fucose. N-linked (GlcNAc...) asparagine glycosylation occurs at asparagine 153. GDP-beta-L-fucose is bound by residues tyrosine 168, valine 192, serine 194, asparagine 195, arginine 202, valine 226, tyrosine 241, asparagine 246, tyrosine 252, glutamate 255, and lysine 256. Positions 169–326 (GFLTVSTNPF…NWRKDFTVNL (158 aa)) are donor-binding. Residues 327 to 359 (PRFWESHACLACDHVKRHQEYKSVGNLEKWFWN) are acceptor-binding.

It belongs to the glycosyltransferase 10 family. As to quaternary structure, homodimer. In terms of processing, N-glycosylated with complex-type N-glycans.

It is found in the golgi apparatus. It localises to the trans-Golgi network membrane. The protein resides in the golgi apparatus membrane. The enzyme catalyses a beta-D-galactosyl-(1-&gt;4)-N-acetyl-beta-D-glucosaminyl derivative + GDP-beta-L-fucose = a beta-D-galactosyl-(1-&gt;4)-[alpha-L-fucosyl-(1-&gt;3)]-N-acetyl-beta-D-glucosaminyl derivative + GDP + H(+). It catalyses the reaction an alpha-Neu5Ac-(2-&gt;3)-beta-D-Gal-(1-&gt;4)-beta-D-GlcNAc-(1-&gt;3)-beta-D-Gal-(1-&gt;4)-beta-D-GlcNAc derivative + GDP-beta-L-fucose = an alpha-Neu5Ac-(2-&gt;3)-beta-D-Gal-(1-&gt;4)-beta-D-GlcNAc-(1-&gt;3)-beta-D-Gal-(1-&gt;4)-[alpha-L-Fuc-(1-&gt;3)]-beta-D-GlcNAc derivative + GDP + H(+). The catalysed reaction is alpha-N-glycoloylneuraminosyl-(2-&gt;3)-beta-D-galactosyl-(1-&gt;4)-N-acetyl-beta-D-glucosaminyl-(1-&gt;3)-beta-D-galactosyl-(1-&gt;4)-N-acetyl-beta-D-glucosaminyl-(1-&gt;3)-beta-D-galactosyl-(1-&gt;4)-beta-D-glucosyl-(1&lt;-&gt;1')-ceramide + GDP-beta-L-fucose = alpha-N-glycoloylneuraminosyl-(2-&gt;3)-beta-D-galactosyl-(1-&gt;4)-N-acetyl-beta-D-glucosaminyl-(1-&gt;3)-beta-D-galactosyl-(1-&gt;4)-[alpha-L-fucosyl-(1-&gt;3)]-N-acetyl-beta-D-glucosaminyl-(1-&gt;3)-beta-D-galactosyl-(1-&gt;4)-beta-D-glucosyl-(1&lt;-&gt;1')-ceramide + GDP + H(+). It carries out the reaction alpha-D-galactosyl-(1-&gt;3)-beta-D-galactosyl-(1-&gt;4)-N-acetyl-beta-D-glucosaminyl-(1-&gt;3)-beta-D-galactosyl-(1-&gt;4)-beta-D-glucosyl-(1&lt;-&gt;1')-ceramide + GDP-beta-L-fucose = a neolactoside IV(3)-alpha-Gal,III(3)-alpha-Fuc-nLc4Cer + GDP + H(+). The enzyme catalyses a neolactoside nLc4Cer + GDP-beta-L-fucose = a neolactoside III(3)-alpha-Fuc-nLc4Cer + GDP + H(+). It catalyses the reaction an N-acetyl-alpha-neuraminyl-(2-&gt;3)-beta-D-galactosyl-(1-&gt;4)-N-acetyl-beta-D-glucosaminyl derivative + GDP-beta-L-fucose = an alpha-Neu5Ac-(2-&gt;3)-beta-D-Gal-(1-&gt;4)-[alpha-L-Fuc-(1-&gt;3)]-beta-D-GlcNAc derivative + GDP + H(+). The catalysed reaction is beta-D-Gal-(1-&gt;4)-beta-D-GlcNAc-(1-&gt;3)-beta-D-Gal-(1-&gt;4)-D-Glc + GDP-beta-L-fucose = beta-D-Gal-(1-&gt;4)-[alpha-L-Fuc-(1-&gt;3)]-beta-D-GlcNAc-(1-&gt;3)-beta-D-Gal-(1-&gt;4)-D-Glc + GDP + H(+). It carries out the reaction an alpha-L-Fuc-(1-&gt;2)-beta-D-Gal-(1-&gt;4)-beta-D-GlcNAc derivative + GDP-beta-L-fucose = an alpha-L-Fuc-(1-&gt;2)-beta-D-Gal-(1-&gt;4)-[alpha-L-Fuc-(1-&gt;3)]-beta-D-GlcNAc derivative + GDP + H(+). The protein operates within protein modification; protein glycosylation. It participates in glycolipid biosynthesis. Its activity is regulated as follows. Activated by Mn2+. Functionally, catalyzes alpha(1-&gt;3) linkage of fucosyl moiety transferred from GDP-beta-L-fucose to N-acetyl glucosamine (GlcNAc) within type 2 lactosamine (LacNAc, beta-D-Gal-(1-&gt;4)-beta-D-GlcNAc-) glycan attached to glycolipids and N- or O-linked glycoproteins. Fucosylates distal type 2 LacNAc and its fucosylated (H-type 2 LacNAc) and sialylated (sialyl-type 2 LacNAc) derivatives to form Lewis x (Lex) (CD15) and Lewis y (Ley) antigenic epitopes involved in cell adhesion and differentiation. Generates Lex epitopes in the brain, presumably playing a role in the maintenance of neuronal stemness and neurite outgrowth in progenitor neural cells. Fucosylates the internal type 2 LacNAc unit of the polylactosamine chain to form VIM-2 antigen that serves as recognition epitope for SELE. Can also modify milk oligosaccharides in particular type 2 tetrasaccharide LNnT. This Bos taurus (Bovine) protein is 4-galactosyl-N-acetylglucosaminide 3-alpha-L-fucosyltransferase 9.